The primary structure comprises 207 residues: Small ribosomal subunit protein uS4 (207 aa).

Residues 96 to 156 (SRLDNTVYRM…KKSHKQSRIR (61 aa)) form the S4 RNA-binding domain.

It belongs to the universal ribosomal protein uS4 family. In terms of assembly, part of the 30S ribosomal subunit. Contacts protein S5. The interaction surface between S4 and S5 is involved in control of translational fidelity.

Functionally, one of the primary rRNA binding proteins, it binds directly to 16S rRNA where it nucleates assembly of the body of the 30S subunit. With S5 and S12 plays an important role in translational accuracy. The protein is Small ribosomal subunit protein uS4 of Blochmanniella pennsylvanica (strain BPEN).